The sequence spans 432 residues: Serine/threonine-protein phosphatase 2A activator 1 (432 aa).

The disordered stretch occupies residues 322-432; it reads PYSKVEDEEP…MAPTKAPWAK (111 aa). Residues 366 to 389 show a composition bias toward basic and acidic residues; sequence TVERLARRDGQRAAREKEEREDRA. A compositionally biased stretch (low complexity) spans 396–412; the sequence is TTGAPGATALPPTRAPG.

The protein belongs to the PTPA-type PPIase family.

It is found in the cytoplasm. Its subcellular location is the nucleus. It carries out the reaction [protein]-peptidylproline (omega=180) = [protein]-peptidylproline (omega=0). Functionally, PPIases accelerate the folding of proteins. It catalyzes the cis-trans isomerization of proline imidic peptide bonds in oligopeptides. Acts as a regulatory subunit for PP2A-like phosphatases modulating their activity or substrate specificity, probably by inducing a conformational change in the catalytic subunit, a direct target of the PPIase. Can reactivate inactive phosphatase PP2A-phosphatase methylesterase complexes (PP2Ai) in presence of ATP and Mg(2+) by dissociating the inactive form from the complex. This Yarrowia lipolytica (strain CLIB 122 / E 150) (Yeast) protein is Serine/threonine-protein phosphatase 2A activator 1 (RRD1).